The chain runs to 93 residues: DNA-binding protein Fis (93 aa).

Residues 74–93 (QTRAALMMGINRGTLRKKLK) constitute a DNA-binding region (H-T-H motif).

The protein belongs to the transcriptional regulatory Fis family. As to quaternary structure, homodimer.

In terms of biological role, activates ribosomal RNA transcription. Plays a direct role in upstream activation of rRNA promoters. This is DNA-binding protein Fis from Klebsiella pneumoniae.